We begin with the raw amino-acid sequence, 633 residues long: Keratin, type II cytoskeletal 2 epidermal (633 aa).

The interval 1–189 (MSCQISCKSR…DPEIQNVKSQ (189 aa)) is head. Arg-18 is modified (asymmetric dimethylarginine). Residues Ser-21, Ser-24, and Ser-60 each carry the phosphoserine modification. Residues 190–225 (EREQIKTLNNKFASFIDKVRFLEQQNQVLQTKWELL) form a coil 1A region. The region spanning 190–503 (EREQIKTLNN…KLLEGEECRM (314 aa)) is the IF rod domain. Residues 226–244 (QQLDVSTRTTNLEPIFQAY) are linker 1. The segment at 245–336 (IAKLKKYVDT…FLFDXELSQM (92 aa)) is coil 1B. A linker 12 region spans residues 337–360 (QTQISETNVTLSMDNNRSLDLDSI). Residues 361–499 (ISEVKAQYEE…ATYRKLLEGE (139 aa)) are coil 2. The tail stretch occupies residues 500–633 (ECRMSGDLSS…SGSSVTFSFR (134 aa)). The span at 518-527 (SSMSSSMTSR) shows a compositional bias: low complexity. The disordered stretch occupies residues 518–633 (SSMSSSMTSR…SGSSVTFSFR (116 aa)). Residues 528-613 (GGFGGYGSGG…GYGSGGGSRG (86 aa)) are compositionally biased toward gly residues. Arg-588 and Arg-612 each carry omega-N-methylarginine.

This sequence belongs to the intermediate filament family. As to quaternary structure, heterotetramer of two type I and two type II keratins. Associates with KRT10.

It localises to the cytoplasm. Functionally, probably contributes to terminal cornification. Associated with keratinocyte activation, proliferation and keratinization. Required for maintenance of corneocytes and keratin filaments in suprabasal keratinocytes in the epidermis of the ear, potentially via moderation of expression and localization of keratins and their partner proteins. Plays a role in the establishment of the epidermal barrier on plantar skin. This is Keratin, type II cytoskeletal 2 epidermal (KRT2) from Canis lupus familiaris (Dog).